A 151-amino-acid polypeptide reads, in one-letter code: UPF0178 protein mma_0312 (151 aa).

The protein belongs to the UPF0178 family.

The polypeptide is UPF0178 protein mma_0312 (Janthinobacterium sp. (strain Marseille) (Minibacterium massiliensis)).